The following is a 323-amino-acid chain: Methionyl-tRNA formyltransferase (323 aa).

Position 115-118 (115-118 (SLLP)) interacts with (6S)-5,6,7,8-tetrahydrofolate.

It belongs to the Fmt family.

It catalyses the reaction L-methionyl-tRNA(fMet) + (6R)-10-formyltetrahydrofolate = N-formyl-L-methionyl-tRNA(fMet) + (6S)-5,6,7,8-tetrahydrofolate + H(+). Attaches a formyl group to the free amino group of methionyl-tRNA(fMet). The formyl group appears to play a dual role in the initiator identity of N-formylmethionyl-tRNA by promoting its recognition by IF2 and preventing the misappropriation of this tRNA by the elongation apparatus. The chain is Methionyl-tRNA formyltransferase from Lactococcus lactis subsp. cremoris (strain SK11).